Consider the following 92-residue polypeptide: Evasin P675 (92 aa).

Residues 1 to 24 form the signal peptide; that stretch reads MEVKTFAFLQIAVIIALGLHLAPA. 3 disulfide bridges follow: cysteine 44–cysteine 63, cysteine 48–cysteine 65, and cysteine 59–cysteine 76. Residue asparagine 47 is glycosylated (N-linked (GlcNAc...) asparagine). A glycan (N-linked (GlcNAc...) asparagine) is linked at asparagine 70.

It localises to the secreted. Salivary chemokine-binding protein which binds to host chemokines CXCL1, CXCL2, CXCL3, CXCL4, CXCL5, CXCL6, CXCL10, CXCL11 and CXCL13. The sequence is that of Evasin P675 from Ixodes ricinus (Common tick).